A 352-amino-acid polypeptide reads, in one-letter code: Protein RecA (352 aa).

Residue G67–T74 participates in ATP binding.

The protein belongs to the RecA family.

The protein localises to the cytoplasm. In terms of biological role, can catalyze the hydrolysis of ATP in the presence of single-stranded DNA, the ATP-dependent uptake of single-stranded DNA by duplex DNA, and the ATP-dependent hybridization of homologous single-stranded DNAs. It interacts with LexA causing its activation and leading to its autocatalytic cleavage. The chain is Protein RecA from Chlamydia trachomatis serovar D (strain ATCC VR-885 / DSM 19411 / UW-3/Cx).